A 118-amino-acid polypeptide reads, in one-letter code: Large ribosomal subunit protein bL20 (118 aa).

Belongs to the bacterial ribosomal protein bL20 family.

Binds directly to 23S ribosomal RNA and is necessary for the in vitro assembly process of the 50S ribosomal subunit. It is not involved in the protein synthesizing functions of that subunit. The protein is Large ribosomal subunit protein bL20 (rplT) of Buchnera aphidicola subsp. Acyrthosiphon pisum (strain APS) (Acyrthosiphon pisum symbiotic bacterium).